Here is a 400-residue protein sequence, read N- to C-terminus: CinA-like protein (400 aa).

Belongs to the CinA family.

The polypeptide is CinA-like protein (Escherichia coli (strain K12 / MC4100 / BW2952)).